The primary structure comprises 255 residues: Taurine import ATP-binding protein TauB (255 aa).

In terms of domain architecture, ABC transporter spans L2–S229. G34–T41 is an ATP binding site.

The protein belongs to the ABC transporter superfamily. Taurine importer (TC 3.A.1.17.1) family. The complex is composed of two ATP-binding proteins (TauB), two transmembrane proteins (TauC) and a solute-binding protein (TauA).

Its subcellular location is the cell inner membrane. It carries out the reaction taurine(out) + ATP + H2O = taurine(in) + ADP + phosphate + H(+). Its function is as follows. Part of the ABC transporter complex TauABC involved in taurine import. Responsible for energy coupling to the transport system. The polypeptide is Taurine import ATP-binding protein TauB (Escherichia coli O6:H1 (strain CFT073 / ATCC 700928 / UPEC)).